Reading from the N-terminus, the 97-residue chain is YcgL domain-containing protein PMI1171 (97 aa).

Residues 3 to 87 (MICAIYRSTK…PVESMLNAYL (85 aa)) enclose the YcgL domain.

This is YcgL domain-containing protein PMI1171 from Proteus mirabilis (strain HI4320).